The sequence spans 1262 residues: Structural maintenance of chromosomes protein 1 (1262 aa).

Residues 171-497 (SRSHEFQAEY…VAVVRQLSEA (327 aa)) are a coiled coil. In terms of domain architecture, SMC hinge spans 524-642 (SVYGRLVDLC…ESQEDAKQLA (119 aa)). Positions 680–937 (KKWDEKVVKQ…RLESLLTKKQ (258 aa)) form a coiled coil. A disordered region spans residues 965-994 (EYEEDDGDDTASQSSQSATDGPSVSEEQIQ). The segment covering 974-991 (TASQSSQSATDGPSVSEE) has biased composition (polar residues). Residues 1017–1086 (DGVRQMSNRL…QQFEKVKTDR (70 aa)) are a coiled coil. A DA-box motif is present at residues 1148–1183 (LSGGEKTIAALALLFAVHGRNPAPFFVLDEIDAALD).

This sequence belongs to the SMC family. SMC1 subfamily. In terms of assembly, component of the cohesin complex, composed of the smc-1 and smc-3 heterodimer attached via their SMC hinge domain, scc-1 which links them, and scc-3. Interacts with smc-3, scc-1, scc-3 and tim-1.

The protein resides in the nucleus. Its subcellular location is the chromosome. Its function is as follows. Involved in chromosome cohesion during cell cycle and in DNA repair. Required for chromosome segregation during mitosis. Central component of cohesin complex. The cohesin complex is required for the cohesion of sister chromatids after DNA replication. The cohesin complex apparently forms a large proteinaceous ring within which sister chromatids can be trapped. At anaphase, the complex is cleaved and dissociates from chromatin, allowing sister chromatids to segregate. This is Structural maintenance of chromosomes protein 1 from Caenorhabditis elegans.